Consider the following 332-residue polypeptide: Ferredoxin--NADP reductase 2 (332 aa).

FAD-binding residues include E37, Q45, Y50, V90, F124, D285, and T326.

This sequence belongs to the ferredoxin--NADP reductase type 2 family. As to quaternary structure, homodimer. It depends on FAD as a cofactor.

It carries out the reaction 2 reduced [2Fe-2S]-[ferredoxin] + NADP(+) + H(+) = 2 oxidized [2Fe-2S]-[ferredoxin] + NADPH. This is Ferredoxin--NADP reductase 2 (yumC) from Bacillus subtilis (strain 168).